Consider the following 313-residue polypeptide: Interferon-inducible double-stranded RNA-dependent protein kinase activator A (313 aa).

Residues 1 to 21 are disordered; the sequence is MSQSRHRAAAPPMEREDSGTF. 3 sufficient for self-association and interaction with TARBP2 regions span residues 1–103, 102–195, and 195–313; these read MSQS…KANA, NASI…FSNI, and ISPE…AERK. At serine 18 the chain carries Phosphoserine. DRBM domains follow at residues 34-101, 126-194, and 240-308; these read TPIQ…ILKA, NPIG…KFSN, and DYIQ…YLKI. 3 positions are modified to phosphoserine: serine 167, serine 246, and serine 287.

It belongs to the PRKRA family. As to quaternary structure, homodimer. Interacts with EIF2AK2/PKR through its DRBM domains. Interacts with DICER1, AGO2 and TARBP2. Also able to interact with dsRNA. Interacts with UBC9. Forms a complex with UBC9 and p53/TP53. Interacts with DUS2L (via DRBM domain). In terms of processing, phosphorylated at Ser-246 in unstressed cells and at Ser-287 in stressed cells. Phosphorylation at Ser-246 appears to be a prerequisite for subsequent phosphorylation at Ser-287. Phosphorylation at Ser-246 and Ser-287 are necessary for activation of EIF2AK2/PKR under conditions of stress.

It is found in the cytoplasm. The protein resides in the perinuclear region. Activates EIF2AK2/PKR in the absence of double-stranded RNA (dsRNA), leading to phosphorylation of EIF2S1/EFI2-alpha and inhibition of translation and induction of apoptosis. Required for siRNA production by DICER1 and for subsequent siRNA-mediated post-transcriptional gene silencing. Does not seem to be required for processing of pre-miRNA to miRNA by DICER1. Promotes UBC9-p53/TP53 association and sumoylation and phosphorylation of p53/TP53 at 'Lys-386' at 'Ser-392' respectively and enhances its activity in a EIF2AK2/PKR-dependent manner. In Bos taurus (Bovine), this protein is Interferon-inducible double-stranded RNA-dependent protein kinase activator A (PRKRA).